Consider the following 239-residue polypeptide: Tungstate uptake system permease protein TupB (239 aa).

An ABC transmembrane type-1 domain is found at 37-233 (IKTTLLSSSI…LIAFCLNFIT (197 aa)). The next 5 membrane-spanning stretches (helical) occupy residues 45-65 (SISI…LGFF), 76-96 (IVDT…YALI), 114-134 (LILG…SNLI), 168-188 (ISVV…AMIV), and 212-232 (FASG…LNFI).

The protein belongs to the binding-protein-dependent transport system permease family. The complex is composed of two ATP-binding proteins (TupC), two transmembrane proteins (TupB) and a solute-binding protein (TupA).

The protein resides in the cell inner membrane. Functionally, part of an ABC transporter complex involved in ultra-high affinity tungstate uptake. Probably responsible for the translocation of the substrate across the membrane. The protein is Tungstate uptake system permease protein TupB of Campylobacter jejuni subsp. jejuni serotype O:2 (strain ATCC 700819 / NCTC 11168).